The sequence spans 184 residues: DOMON domain-containing protein CBG21755 (184 aa).

The signal sequence occupies residues 1–20 (MIVPISLLFLFLSFVPFSYS). The region spanning 28–145 (EVASMSWMVK…CVNWIVVPGG (118 aa)) is the DOMON domain. A glycan (N-linked (GlcNAc...) asparagine) is linked at Asn49.

The protein localises to the secreted. The protein is DOMON domain-containing protein CBG21755 of Caenorhabditis briggsae.